The following is a 1098-amino-acid chain: Transcription elongation regulator 1 (1098 aa).

Basic and acidic residues predominate over residues methionine 1–asparagine 15. Residues methionine 1 to serine 105 form a disordered region. Residue serine 11 is modified to Phosphoserine. The residue at position 20 (arginine 20) is an Omega-N-methylarginine. Asymmetric dimethylarginine is present on residues arginine 28, arginine 30, arginine 41, and arginine 48. The segment covering proline 32–serine 105 has biased composition (pro residues). A WW 1 domain is found at proline 131 to glycine 164. A coiled-coil region spans residues glutamine 184–glutamine 244. Positions serine 259–proline 333 are enriched in low complexity. The tract at residues serine 259–valine 348 is disordered. The segment covering glutamine 334–valine 344 has biased composition (pro residues). In terms of domain architecture, WW 2 spans alanine 429–glutamate 462. 2 stretches are compositionally biased toward basic and acidic residues: residues leucine 469 to serine 481 and glutamate 496 to proline 506. The tract at residues leucine 469 to threonine 526 is disordered. Residues lysine 503 and lysine 507 each participate in a glycyl lysine isopeptide (Lys-Gly) (interchain with G-Cter in SUMO2) cross-link. Positions proline 528–aspartate 561 constitute a WW 3 domain. The stretch at alanine 606–alanine 655 forms a coiled coil. Lysine 608 is covalently cross-linked (Glycyl lysine isopeptide (Lys-Gly) (interchain with G-Cter in SUMO2)). The segment at glutamate 615–lysine 640 is disordered. The Nuclear localization signal motif lies at lysine 626 to arginine 630. The segment covering arginine 630–lysine 640 has biased composition (basic and acidic residues). Serine 638 is modified (phosphoserine). FF domains follow at residues leucine 659–threonine 712, isoleucine 725–alanine 779, and arginine 791–lysine 846. The residue at position 834 (serine 834) is a Phosphoserine. The stretch at isoleucine 844 to leucine 906 forms a coiled coil. Positions arginine 870 to lysine 895 are disordered. FF domains follow at residues arginine 896–alanine 952, threonine 954–aspartate 1010, and tyrosine 1012–aspartate 1077. Residue serine 933 is modified to Phosphoserine. Positions aspartate 1076–lysine 1098 are disordered.

As to quaternary structure, binds formin. Interacts (via the second WW domain) with TREX1 (via proline-rich region). Binds RNA polymerase II, HD and SF1. Detected in brain neurons.

The protein resides in the nucleus. Functionally, transcription factor that binds RNA polymerase II and inhibits the elongation of transcripts from target promoters. Regulates transcription elongation in a TATA box-dependent manner. Necessary for TAT-dependent activation of the human immunodeficiency virus type 1 (HIV-1) promoter. This Homo sapiens (Human) protein is Transcription elongation regulator 1 (TCERG1).